Reading from the N-terminus, the 124-residue chain is Fluoride-specific ion channel FluC 2 (124 aa).

3 helical membrane passes run 36 to 56, 66 to 86, and 100 to 120; these read TFLI…YLAF, LFVM…SLDT, and LYAI…LALV. Na(+)-binding residues include Gly74 and Thr77.

Belongs to the fluoride channel Fluc/FEX (TC 1.A.43) family.

The protein resides in the cell inner membrane. The enzyme catalyses fluoride(in) = fluoride(out). Its activity is regulated as follows. Na(+) is not transported, but it plays an essential structural role and its presence is essential for fluoride channel function. Its function is as follows. Fluoride-specific ion channel. Important for reducing fluoride concentration in the cell, thus reducing its toxicity. This chain is Fluoride-specific ion channel FluC 2, found in Nitrobacter hamburgensis (strain DSM 10229 / NCIMB 13809 / X14).